A 492-amino-acid chain; its full sequence is MEKVDIFKDIAERTGGDIYLGVVGAVRTGKSTFIKKFMELVVLPNISNEADRARAQDELPQSAAGKTIMTTEPKFVPNQAMSVHVSDGLDVNIRLVDCVGYTVPGAKGYEDENGPRMINTPWYEEPIPFHEAAEIGTRKVIQEHSTIGVVITTDGTIGDIARSDYIEAEERVIEELKEVGKPFIMVINSVRPYHPETEAMRQDLSEKYDIPVLAMSVESMRESDVLSVLREALYEFPVLEVNVNLPSWVMVLKENHWLRESYQESVKETVKDIKRLRDVDRVVGQFSEFEFIESAGLAGIELGQGVAEIDLYAPDHLYDQILKEVVGVEIRGRDHLLELMQDFAHAKTEYDQVSDALKMVKQTGYGIAAPALADMSLDEPEIIRQGSRFGVRLKAVAPSIHMIKVDVESEFAPIIGTEKQSEELVRYLMQDFEDDPLSIWNSDIFGRSLSSIVREGIQAKLSLMPENARYKLKETLERIINEGSGGLIAIIL.

The Walker A motif; involved in ATP-binding and hydrolysis motif lies at 24-31; sequence GAVRTGKS. Residue 24 to 31 participates in ATP binding; sequence GAVRTGKS.

In terms of assembly, polymerizes to self-assemble into static filaments. ATP hydrolysis is required by every subunit for incorporation into the growing polymer by inducing a conformational change that drives polymerization of a nucleotide-free filament. Polymerization requires a critical concentration of the protein and only occurs after it is localized to the surface of the developing spore. Interacts (via extreme C-terminus Gly-486) with SpoVM (via Ile-6). Interacts (via full-length) with SpoVID (via C-terminus 499-575 AA). Interacts with SafA. In terms of processing, seems to be cleaved by the YabG protease.

The protein localises to the cytoplasm. It carries out the reaction ATP + H2O = ADP + phosphate + H(+). ATPase. Has a role at an early stage in the morphogenesis of the spore coat outer layers. Its ATP hydrolysis is required for proper assembly of the spore coat. Forms a basement layer around the outside surface of the forespore and self-assembles irreversibly into higher order structures by binding and hydrolyzing ATP thus creating a durable and stable platform upon which thereafter morphogenesis of the coat can take place. Required for proper localization of spore coat protein CotE and sporulation-specific proteins including SpoVM. The sequence is that of Stage IV sporulation protein A (spoIVA) from Bacillus subtilis (strain 168).